A 249-amino-acid polypeptide reads, in one-letter code: Acidic leucine-rich nuclear phosphoprotein 32 family member A (249 aa).

Residue T15 is modified to Phosphothreonine. Phosphoserine is present on S17. LRR repeat units follow at residues 18 to 38 (DVKE…EGLT), 43 to 64 (ELEF…PKLN), 65 to 87 (KLKK…AEKC), and 89 to 110 (NLTH…EPLK). The LRRCT domain maps to 123–161 (CEVTNLNDYRENVFKLLPQLTYLDGYDRDDKEAPDSDAE). The span at 147-156 (GYDRDDKEAP) shows a compositional bias: basic and acidic residues. The disordered stretch occupies residues 147-249 (GYDRDDKEAP…EPEDEGEDDD (103 aa)). The tract at residues 150–174 (RDDKEAPDSDAEGYVEGLDDDEEDE) is necessary for tumor-suppressive function. Residues 157 to 230 (DSDAEGYVEG…DEEDEEELGE (74 aa)) show a composition bias toward acidic residues. A phosphoserine mark is found at S158 and S204. Residues 165–249 (EGLDDDEEDE…EPEDEGEDDD (85 aa)) form an interaction with E4F1 region.

It belongs to the ANP32 family. In terms of assembly, component of the SET complex, composed of at least ANP32A, APEX1, HMGB2, NME1, SET and TREX1. Directly interacts with SET. Interacts with ATXN1/SCA1. Interacts with MAP1B. Interacts with ELAVL1. Part of the INHAT (inhibitor of histone acetyltransferases) complex. Interacts with E4F1. The N-terminus is blocked. Post-translationally, phosphorylated on serine residues, at least in part by casein kinase 2/CK2. In terms of processing, some glutamate residues are glycylated by TTLL8. This modification occurs exclusively on glutamate residues and results in a glycine chain on the gamma-carboxyl group. In terms of tissue distribution, widely distributed in the central nervous system, with an abundant expression in the cerebellum.

Its subcellular location is the nucleus. The protein localises to the cytoplasm. It is found in the endoplasmic reticulum. Functionally, multifunctional protein that is involved in the regulation of many processes including tumor suppression, apoptosis, cell cycle progression or transcription. Promotes apoptosis by favouring the activation of caspase-9/CASP9 and allowing apoptosome formation. In addition, plays a role in the modulation of histone acetylation and transcription as part of the INHAT (inhibitor of histone acetyltransferases) complex. Inhibits the histone-acetyltranferase activity of EP300/CREBBP (CREB-binding protein) and EP300/CREBBP-associated factor by histone masking. Preferentially binds to unmodified histone H3 and sterically inhibiting its acetylation and phosphorylation leading to cell growth inhibition. Participates in other biochemical processes such as regulation of mRNA nuclear-to-cytoplasmic translocation and stability by its association with ELAVL1 (Hu-antigen R). Plays a role in E4F1-mediated transcriptional repression as well as inhibition of protein phosphatase 2A. This is Acidic leucine-rich nuclear phosphoprotein 32 family member A (ANP32A) from Bos taurus (Bovine).